We begin with the raw amino-acid sequence, 201 residues long: Large ribosomal subunit protein uL4 (201 aa).

The tract at residues 44–68 (RAQKSRAEVSGSGRKPWRQKGTGRA) is disordered.

It belongs to the universal ribosomal protein uL4 family. As to quaternary structure, part of the 50S ribosomal subunit.

One of the primary rRNA binding proteins, this protein initially binds near the 5'-end of the 23S rRNA. It is important during the early stages of 50S assembly. It makes multiple contacts with different domains of the 23S rRNA in the assembled 50S subunit and ribosome. In terms of biological role, forms part of the polypeptide exit tunnel. The chain is Large ribosomal subunit protein uL4 from Buchnera aphidicola subsp. Acyrthosiphon pisum (strain 5A).